The chain runs to 267 residues: N-formylglutamate deformylase (267 aa).

The protein belongs to the N-formylglutamate deformylase family. Monomer.

The enzyme catalyses N-formyl-L-glutamate + H2O = formate + L-glutamate. The protein operates within amino-acid degradation; L-histidine degradation into L-glutamate; L-glutamate from N-formimidoyl-L-glutamate (deiminase route): step 2/2. Stimulated by Co(2+). Fe(2+) is also a good activator, particularly at lower concentrations, but it inhibits slightly the activity when used at concentrations over 0.1 mM. Other divalent metals tested (Cd(2+), Ca(2+), Mn(2+), Zn(2+), Ni(2+) and Mg(2+)) are not effective activators. Functionally, catalyzes the hydrolysis of N-formyl-L-glutamate to formate and L-glutamate. The chain is N-formylglutamate deformylase from Pseudomonas putida (Arthrobacter siderocapsulatus).